The sequence spans 79 residues: Acyl carrier protein (79 aa).

In terms of domain architecture, Carrier spans 2–77 (SEIGERVKKI…DATKFLEKNA (76 aa)). Position 37 is an O-(pantetheine 4'-phosphoryl)serine (serine 37).

This sequence belongs to the acyl carrier protein (ACP) family. In terms of processing, 4'-phosphopantetheine is transferred from CoA to a specific serine of apo-ACP by AcpS. This modification is essential for activity because fatty acids are bound in thioester linkage to the sulfhydryl of the prosthetic group.

The protein localises to the cytoplasm. It functions in the pathway lipid metabolism; fatty acid biosynthesis. Its function is as follows. Carrier of the growing fatty acid chain in fatty acid biosynthesis. The sequence is that of Acyl carrier protein from Rhodopseudomonas palustris (strain HaA2).